A 422-amino-acid chain; its full sequence is Isocitrate dehydrogenase [NADP] (422 aa).

Residue Thr94 participates in NADP(+) binding. Residues Ser103, Asn105, Arg109, Arg119, and Arg143 each contribute to the D-threo-isocitrate site. Asp310 contributes to the Mg(2+) binding site. NADP(+) contacts are provided by residues His344–Tyr350, Asn357, Tyr396, and Arg400.

It belongs to the isocitrate and isopropylmalate dehydrogenases family. Homodimer. The cofactor is Mg(2+). Requires Mn(2+) as cofactor.

It catalyses the reaction D-threo-isocitrate + NADP(+) = 2-oxoglutarate + CO2 + NADPH. Catalyzes the oxidative decarboxylation of isocitrate to 2-oxoglutarate and carbon dioxide with the concomitant reduction of NADP(+). This is Isocitrate dehydrogenase [NADP] (icd) from Staphylococcus epidermidis (strain ATCC 35984 / DSM 28319 / BCRC 17069 / CCUG 31568 / BM 3577 / RP62A).